A 343-amino-acid chain; its full sequence is Pentatricopeptide repeat-containing protein At1g06270 (343 aa).

PPR repeat units follow at residues 98–133, 134–169, 170–204, 205–240, 241–275, and 276–310; these read PKIVYSSLLTYCLQSSDPLPLSFAILQRTLRSGCLP, NPQTHLLLSDAWLERRRGSQSVADIINEMKLIGYSP, DTGTCNYLVSSLCAVDKLDEAIKVVEEMSAAGCIP, DVESYGAVINSLCLARKTTDVVKIVKEMVSKAGISP, RKGMLTKVAAALRANREIWKAIEMIEFVESRDYPV, and EFESYEVVVEGCLEVREYILAGKVVMRMTDRGFIP.

Belongs to the PPR family. P subfamily.

The chain is Pentatricopeptide repeat-containing protein At1g06270 from Arabidopsis thaliana (Mouse-ear cress).